Here is a 798-residue protein sequence, read N- to C-terminus: uncharacterized protein (798 aa).

Residues 1–13 (MSSSQSPSTPSAS) are compositionally biased toward low complexity. The N-terminal 58 residues, 1 to 58 (MSSSQSPSTPSASLVDSSDSKHPDDLPQIYKRRSVWTSSEDAVSSSNSPEQTTPFTVR), are a transit peptide targeting the chloroplast. 3 disordered regions span residues 1–99 (MSSS…WQDA), 135–158 (AEKK…SMCT), and 417–473 (TGLI…AEPS). Residues 35 to 55 (VWTSSEDAVSSSNSPEQTTPF) are compositionally biased toward polar residues. The segment covering 57 to 79 (VREDTNADIARELDLPDDPEPHL) has biased composition (basic and acidic residues). Residues 137–146 (KKKRKKKKKA) show a composition bias toward basic residues. The segment covering 462–473 (AAPAEAQGAEPS) has biased composition (low complexity). Residues 578–658 (RSNMEVAGKL…MLSEARGLRD (81 aa)) adopt a coiled-coil conformation. Residues 749–798 (DDLKAPAPEPAPLSPGGHRSVESLADEAGITDQAGSLLPAKDNRPSEDLD) are disordered. S762 is modified (phosphoserine). A compositionally biased stretch (basic and acidic residues) spans 789 to 798 (KDNRPSEDLD).

Its subcellular location is the plastid. The protein resides in the chloroplast. This is an uncharacterized protein from Arabidopsis thaliana (Mouse-ear cress).